Here is a 220-residue protein sequence, read N- to C-terminus: uncharacterized protein (220 aa).

Residues 165-202 (DKYEDLISDYNKIMEKYREVIKSEIEKYKALSKRKNDI) are a coiled coil.

This is an uncharacterized protein from Pasteurella multocida (strain Pm70).